We begin with the raw amino-acid sequence, 600 residues long: Proline--tRNA ligase (600 aa).

Belongs to the class-II aminoacyl-tRNA synthetase family. ProS type 1 subfamily. In terms of assembly, homodimer.

It is found in the cytoplasm. It catalyses the reaction tRNA(Pro) + L-proline + ATP = L-prolyl-tRNA(Pro) + AMP + diphosphate. In terms of biological role, catalyzes the attachment of proline to tRNA(Pro) in a two-step reaction: proline is first activated by ATP to form Pro-AMP and then transferred to the acceptor end of tRNA(Pro). As ProRS can inadvertently accommodate and process non-cognate amino acids such as alanine and cysteine, to avoid such errors it has two additional distinct editing activities against alanine. One activity is designated as 'pretransfer' editing and involves the tRNA(Pro)-independent hydrolysis of activated Ala-AMP. The other activity is designated 'posttransfer' editing and involves deacylation of mischarged Ala-tRNA(Pro). The misacylated Cys-tRNA(Pro) is not edited by ProRS. In Prochlorococcus marinus (strain MIT 9515), this protein is Proline--tRNA ligase.